We begin with the raw amino-acid sequence, 446 residues long: Histidine--tRNA ligase (446 aa).

It belongs to the class-II aminoacyl-tRNA synthetase family. Homodimer.

It is found in the cytoplasm. It catalyses the reaction tRNA(His) + L-histidine + ATP = L-histidyl-tRNA(His) + AMP + diphosphate + H(+). The chain is Histidine--tRNA ligase from Burkholderia lata (strain ATCC 17760 / DSM 23089 / LMG 22485 / NCIMB 9086 / R18194 / 383).